The primary structure comprises 359 residues: Molybdenum import ATP-binding protein ModC (359 aa).

An ABC transporter domain is found at 1–233 (MSGLTVSIRG…IDAESEGGGV (233 aa)). Position 32 to 39 (32 to 39 (GHSGAGKT)) interacts with ATP. The Mop domain occupies 289 to 355 (AISIRNLLPV…VKAVSVDRAA (67 aa)).

This sequence belongs to the ABC transporter superfamily. Molybdate importer (TC 3.A.1.8) family. In terms of assembly, the complex is composed of two ATP-binding proteins (ModC), two transmembrane proteins (ModB) and a solute-binding protein (ModA).

It localises to the cell inner membrane. The catalysed reaction is molybdate(out) + ATP + H2O = molybdate(in) + ADP + phosphate + H(+). Functionally, part of the ABC transporter complex ModABC involved in molybdenum import. Responsible for energy coupling to the transport system. The polypeptide is Molybdenum import ATP-binding protein ModC (Brucella melitensis biotype 1 (strain ATCC 23456 / CCUG 17765 / NCTC 10094 / 16M)).